The sequence spans 507 residues: Chromosomal replication initiator protein DnaA (507 aa).

Positions 1–112 are domain I, interacts with DnaA modulators; it reads MTDDPGSGFT…PATDEADDTT (112 aa). A disordered region spans residues 99-162; that stretch reads RIAPPATDEA…ERPRNTDSAT (64 aa). Positions 113-127 are enriched in polar residues; the sequence is VPPSENPATTSPDTT. Residues 113–166 form a domain II region; that stretch reads VPPSENPATTSPDTTTDNDEIDDSAAARGDNQHSWPSYFTERPRNTDSATAGVT. Positions 167–383 are domain III, AAA+ region; sequence SLNRRYTFDT…GALIRVTAFA (217 aa). Residues glycine 211, glycine 213, lysine 214, and threonine 215 each contribute to the ATP site. Residues 384–507 form a domain IV, binds dsDNA region; it reads SLNKTPIDKA…TTRIRQRSKR (124 aa).

The protein belongs to the DnaA family. Oligomerizes as a right-handed, spiral filament on DNA at oriC.

It is found in the cytoplasm. Its function is as follows. Plays an essential role in the initiation and regulation of chromosomal replication. ATP-DnaA binds to the origin of replication (oriC) to initiate formation of the DNA replication initiation complex once per cell cycle. Binds the DnaA box (a 9 base pair repeat at the origin) and separates the double-stranded (ds)DNA. Forms a right-handed helical filament on oriC DNA; dsDNA binds to the exterior of the filament while single-stranded (ss)DNA is stabiized in the filament's interior. The ATP-DnaA-oriC complex binds and stabilizes one strand of the AT-rich DNA unwinding element (DUE), permitting loading of DNA polymerase. After initiation quickly degrades to an ADP-DnaA complex that is not apt for DNA replication. Binds acidic phospholipids. This is Chromosomal replication initiator protein DnaA from Mycobacterium bovis (strain ATCC BAA-935 / AF2122/97).